Here is a 461-residue protein sequence, read N- to C-terminus: Homocitrate synthase (461 aa).

One can recognise a Pyruvate carboxyltransferase domain in the interval 4-259 (VGILDSTLRE…IEVVKLDKLQ (256 aa)). R12 contacts 2-oxoglutarate. E13 serves as a coordination point for Mg(2+). Positions 76, 136, and 170 each coordinate 2-oxoglutarate. Mg(2+)-binding residues include H198 and H200. H292 (proton acceptor) is an active-site residue.

The protein belongs to the alpha-IPM synthase/homocitrate synthase family. Homocitrate synthase LYS20/LYS21 subfamily. The cofactor is Mg(2+). It depends on Mn(2+) as a cofactor.

The enzyme catalyses acetyl-CoA + 2-oxoglutarate + H2O = (2R)-homocitrate + CoA + H(+). It functions in the pathway amino-acid biosynthesis; L-lysine biosynthesis via AAA pathway; L-alpha-aminoadipate from 2-oxoglutarate: step 1/5. In terms of biological role, catalyzes the aldol-type condensation of 2-oxoglutarate with acetyl-CoA to yield homocitrate. Carries out the first step of the alpha-aminoadipate (AAA) lysine biosynthesis pathway. In Saccharolobus islandicus (strain L.S.2.15 / Lassen #1) (Sulfolobus islandicus), this protein is Homocitrate synthase.